The primary structure comprises 233 residues: Germin-like protein 3-7 (233 aa).

A signal peptide spans 1–35 (MSSSSSMECTGNMSAAPLLVLTVAVLAVLASTCAA). A disulfide bridge connects residues C44 and C63. The region spanning 77–225 (AGLAAAGSTD…SFQVDAEIIK (149 aa)) is the Cupin type-1 domain. Residues H125, H127, E132, and H171 each coordinate Mn(2+). N-linked (GlcNAc...) asparagine glycosylation occurs at N178.

This sequence belongs to the germin family. Oligomer (believed to be a pentamer but probably hexamer).

It is found in the secreted. The protein localises to the extracellular space. It localises to the apoplast. May play a role in plant defense. Probably has no oxalate oxidase activity even if the active site is conserved. The chain is Germin-like protein 3-7 (GER7) from Oryza sativa subsp. japonica (Rice).